A 799-amino-acid polypeptide reads, in one-letter code: Putative aconitate hydratase, mitochondrial (799 aa).

Residues 1 to 32 (MVRQLVWQRATASRRLAPKCLSPQQLFARRGL) constitute a mitochondrion transit peptide. Residues Q108 and 201-203 (DSH) contribute to the substrate site. C399, C462, and C465 together coordinate [4Fe-4S] cluster. Substrate is bound by residues R489 and R494. The tract at residues 538–564 (KFRPPQGSDLPSAGFADGNPALQPSAG) is disordered. 685–686 (AR) is a substrate binding site.

This sequence belongs to the aconitase/IPM isomerase family.

It is found in the mitochondrion. Has no detectable activity towards cis-acontiate or cis-homoaconitate. The chain is Putative aconitate hydratase, mitochondrial (acoB) from Aspergillus fumigatus (strain ATCC MYA-4609 / CBS 101355 / FGSC A1100 / Af293) (Neosartorya fumigata).